Consider the following 136-residue polypeptide: Keratin-associated protein 4-2 (136 aa).

20 tandem repeats follow at residues 5-9, 20-24, 25-29, 30-34, 35-39, 40-44, 45-49, 50-54, 55-59, 60-64, 65-69, 70-74, 75-79, 80-84, 90-94, 95-99, 100-104, 110-114, 120-124, and 125-129. Residues 5–129 form a 20 X 5 AA repeats OF C-C-[GRQVS]-[SPT]-[VSTQ] region; the sequence is CCGSVCSDQG…CCVSTCCRPT (125 aa).

It belongs to the KRTAP type 4 family. As to quaternary structure, interacts with hair keratins.

In the hair cortex, hair keratin intermediate filaments are embedded in an interfilamentous matrix, consisting of hair keratin-associated proteins (KRTAP), which are essential for the formation of a rigid and resistant hair shaft through their extensive disulfide bond cross-linking with abundant cysteine residues of hair keratins. The matrix proteins include the high-sulfur and high-glycine-tyrosine keratins. The chain is Keratin-associated protein 4-2 (KRTAP4-2) from Homo sapiens (Human).